We begin with the raw amino-acid sequence, 269 residues long: Adenylate kinase (269 aa).

Residue 61-66 (GAGKGT) participates in ATP binding. Residues 81–110 (ATGDMLREQVARQTELGKAAKQIMDQGGLV) are NMP. Residues Thr-82, Arg-87, 108–110 (GLV), 137–140 (GFPR), and Gln-144 contribute to the AMP site. The segment at 178-215 (GRLVHPASGRSYHKEFNPPKKPMTDDITGEPLIQRSDD) is LID. Residues Arg-179 and 188-189 (SY) each bind ATP. 2 residues coordinate AMP: Arg-212 and Arg-223. Gln-251 is an ATP binding site.

It belongs to the adenylate kinase family. AK2 subfamily. As to quaternary structure, monomer.

It is found in the cytoplasm. The protein resides in the cytosol. It localises to the mitochondrion intermembrane space. The enzyme catalyses AMP + ATP = 2 ADP. Functionally, catalyzes the reversible transfer of the terminal phosphate group between ATP and AMP. Plays an important role in cellular energy homeostasis and in adenine nucleotide metabolism. Adenylate kinase activity is critical for regulation of the phosphate utilization and the AMP de novo biosynthesis pathways. This Cryptococcus neoformans var. neoformans serotype D (strain B-3501A) (Filobasidiella neoformans) protein is Adenylate kinase.